Here is a 722-residue protein sequence, read N- to C-terminus: MRPNLLAAAIAVPLSLLAAQIAQAGEGMWVPQQLPEIAGPLKKAGLKLSPQQISDLTGDPMGAVVALGGCTASFVSPNGLVVTNHHCAYGAIQLNSTAENNLIKNGFNAPTTADEVSAGPNARVFVLDEITDVTKDAKAAIAAAGDDALARTKALEAFEKKLIADCEAEAGFRCRLYSFSGGNTYRLFKNLEIKDVRLAYAPPGSVGKFGGDIDNWMWPRHTGDFAFYRAYVGKDGKPAAFSKDNVPYQPKHWLKFADQPLGAGDFVMVAGYPGSTNRYALAAEFDNTAQWTYPTIARHYKNQIAMVEAAGKQNADIQVKYAATMAGWNNTSKNYDGQLEGFKRIDAAGQKLREEAAVLGWLKGQGAKGQPALDAHAKLLDLLEQSKATRDRDLTLALFNNTAMLGSATQLYRLSIEREKPNAERESGYQERDLPAIEGGLKQLERRYVAAMDRQLQEYWLNEYIKLPADQRVAAVDAWLGGNDAAAVKRALDRLAGTKLGSTEERLKWFAADRKAFEASNDPAIQYAVAVMPTLLKLEQERKTRAGENLAARPVYLQALADYKKSQGEFVYPDANLSLRITFGNVMGYAPKDGMEYTPFTTLEGVVAKETGQDPFDSPKALLDAVAAKRYGGLEDKRIGSVPVNYLSDLDITGGNSGSPVLDAHGKLVGLAFDGNWESVSSNWVFDPKMTRMIAVDGRYLRWIMQEVYPAPQLLKEMNVGK.

Residues 1-24 form the signal peptide; the sequence is MRPNLLAAAIAVPLSLLAAQIAQA. Disulfide bonds link Cys70/Cys87 and Cys166/Cys174. Catalysis depends on His86, which acts as the Charge relay system. Position 215 to 216 (215 to 216) interacts with substrate; it reads NW. Residue Asp224 is the Charge relay system of the active site. Residues Asn330, 655–657, and 673–674 each bind substrate; these read GNS and FD. Ser657 serves as the catalytic Charge relay system.

This sequence belongs to the peptidase S46 family. As to quaternary structure, homodimer.

With respect to regulation, completely inhibited by the serine protease inhibitor diisopropyl fluorophosphate (DFP) and potently inhibited by 0.5 mM ZnCl(2), 10 mM o-phenanthlorine, phenylmethanesulfonyl fluoride (PMSF) and N-tosyl-L-phenyl-alanyl chloromethyl ketone (TPCK), but not by N-tosyl-L-lysyl chloromethyl ketone (TLCK). Activity is not affected significantly by protease inhibitors, such as chymostatin, leupeptin, N-ethylmaleimide (NEM), iodoacetate (IAA), L-trans-epoxysuccinyl-leucylamido(4-guanido)butane (E64) and pepstatin A or by CoCl(2), CaCl(2) and EDTA. In terms of biological role, exopeptidase that catalyzes the removal of dipeptide units (NH2-P2-P1-) from the free amino termini of oligopeptides and small proteins. Peptide digestion is sequential and substrate recognition is non-specific, with the exception that Pro is not suitable as a P1 residue. Removes many residues of bioactive oligopeptides such as angiotensin I and neuromedin N and also cleaves oxidized insulin B chain. Able to hydrolyze an X-Pro bond, an imido bond. No endopeptidase activity. May play a physiological role in feeding. This is Dipeptidyl aminopeptidase BII from Pseudoxanthomonas mexicana.